Reading from the N-terminus, the 349-residue chain is ATPase GET3 (349 aa).

26–33 (KGGVGKTT) is an ATP binding site. Residue D57 is part of the active site. E242 and N269 together coordinate ATP. Zn(2+) is bound by residues C281 and C284.

The protein belongs to the arsA ATPase family. As to quaternary structure, homodimer. Component of the Golgi to ER traffic (GET) complex, which is composed of GET1, GET2 and GET3. Within the complex, GET1 and GET2 form a heterotetramer which is stabilized by phosphatidylinositol binding and which binds to the GET3 homodimer. Interacts with the chloride channel protein GEF1.

The protein localises to the cytoplasm. The protein resides in the endoplasmic reticulum. It is found in the golgi apparatus. Functionally, ATPase required for the post-translational delivery of tail-anchored (TA) proteins to the endoplasmic reticulum. Recognizes and selectively binds the transmembrane domain of TA proteins in the cytosol. This complex then targets to the endoplasmic reticulum by membrane-bound receptors GET1 and GET2, where the tail-anchored protein is released for insertion. This process is regulated by ATP binding and hydrolysis. ATP binding drives the homodimer towards the closed dimer state, facilitating recognition of newly synthesized TA membrane proteins. ATP hydrolysis is required for insertion. Subsequently, the homodimer reverts towards the open dimer state, lowering its affinity for the GET1-GET2 receptor, and returning it to the cytosol to initiate a new round of targeting. Cooperates with the HDEL receptor ERD2 to mediate the ATP-dependent retrieval of resident ER proteins that contain a C-terminal H-D-E-L retention signal from the Golgi to the ER. Involved in low-level resistance to the oxyanions arsenite and arsenate, and in heat tolerance. This is ATPase GET3 from Candida tropicalis (strain ATCC MYA-3404 / T1) (Yeast).